Consider the following 184-residue polypeptide: ATP synthase subunit b, chloroplastic (184 aa).

Residues 27–49 (LATNPINLSVVFGVLIFFGKGVL) form a helical membrane-spanning segment.

Belongs to the ATPase B chain family. In terms of assembly, F-type ATPases have 2 components, F(1) - the catalytic core - and F(0) - the membrane proton channel. F(1) has five subunits: alpha(3), beta(3), gamma(1), delta(1), epsilon(1). F(0) has four main subunits: a(1), b(1), b'(1) and c(10-14). The alpha and beta chains form an alternating ring which encloses part of the gamma chain. F(1) is attached to F(0) by a central stalk formed by the gamma and epsilon chains, while a peripheral stalk is formed by the delta, b and b' chains.

The protein localises to the plastid. It localises to the chloroplast thylakoid membrane. F(1)F(0) ATP synthase produces ATP from ADP in the presence of a proton or sodium gradient. F-type ATPases consist of two structural domains, F(1) containing the extramembraneous catalytic core and F(0) containing the membrane proton channel, linked together by a central stalk and a peripheral stalk. During catalysis, ATP synthesis in the catalytic domain of F(1) is coupled via a rotary mechanism of the central stalk subunits to proton translocation. Its function is as follows. Component of the F(0) channel, it forms part of the peripheral stalk, linking F(1) to F(0). The sequence is that of ATP synthase subunit b, chloroplastic from Arabidopsis thaliana (Mouse-ear cress).